The following is a 186-amino-acid chain: Glutathione peroxidase 7 (186 aa).

Positions 1-18 (MVAAVATAWLLLWAAACA) are cleaved as a signal peptide. The active site involves cysteine 56.

This sequence belongs to the glutathione peroxidase family.

The protein resides in the secreted. It carries out the reaction 2 glutathione + H2O2 = glutathione disulfide + 2 H2O. Functionally, it protects esophageal epithelia from hydrogen peroxide-induced oxidative stress. It suppresses acidic bile acid-induced reactive oxygen species (ROS) and protects against oxidative DNA damage and double-strand breaks. The sequence is that of Glutathione peroxidase 7 (Gpx7) from Mus musculus (Mouse).